The following is a 111-amino-acid chain: Urease subunit beta (111 aa).

The protein belongs to the urease beta subunit family. In terms of assembly, heterotrimer of UreA (gamma), UreB (beta) and UreC (alpha) subunits. Three heterotrimers associate to form the active enzyme.

The protein resides in the cytoplasm. It catalyses the reaction urea + 2 H2O + H(+) = hydrogencarbonate + 2 NH4(+). It functions in the pathway nitrogen metabolism; urea degradation; CO(2) and NH(3) from urea (urease route): step 1/1. The polypeptide is Urease subunit beta (Geobacillus kaustophilus (strain HTA426)).